A 237-amino-acid polypeptide reads, in one-letter code: Uridylate kinase (237 aa).

Residue 12–15 (KISG) participates in ATP binding. G54 serves as a coordination point for UMP. ATP-binding residues include G55 and R59. UMP contacts are provided by residues D72 and 133–140 (TGNPFFST). Positions 166 and 169 each coordinate ATP.

The protein belongs to the UMP kinase family. In terms of assembly, homohexamer.

It is found in the cytoplasm. The catalysed reaction is UMP + ATP = UDP + ADP. It functions in the pathway pyrimidine metabolism; CTP biosynthesis via de novo pathway; UDP from UMP (UMPK route): step 1/1. With respect to regulation, inhibited by UTP. Catalyzes the reversible phosphorylation of UMP to UDP. This Caldanaerobacter subterraneus subsp. tengcongensis (strain DSM 15242 / JCM 11007 / NBRC 100824 / MB4) (Thermoanaerobacter tengcongensis) protein is Uridylate kinase.